We begin with the raw amino-acid sequence, 104 residues long: Ribonuclease P protein component 4 (104 aa).

Zn(2+) is bound by residues Cys-63, Cys-66, Cys-89, and Cys-92.

Belongs to the eukaryotic/archaeal RNase P protein component 4 family. In terms of assembly, consists of a catalytic RNA component and at least 4-5 protein subunits. Zn(2+) serves as cofactor.

The protein resides in the cytoplasm. The catalysed reaction is Endonucleolytic cleavage of RNA, removing 5'-extranucleotides from tRNA precursor.. Part of ribonuclease P, a protein complex that generates mature tRNA molecules by cleaving their 5'-ends. The sequence is that of Ribonuclease P protein component 4 from Methanosphaera stadtmanae (strain ATCC 43021 / DSM 3091 / JCM 11832 / MCB-3).